Consider the following 194-residue polypeptide: Homing endonuclease I-DmoI (194 aa).

A DOD-type homing endonuclease domain is found at leucine 14 to valine 147. Residues aspartate 21 and glutamate 117 contribute to the active site.

Requires a divalent metal cation as cofactor.

In terms of biological role, endonuclease involved in intron homing. Recognizes DNA in the 23S rRNA gene intron (minimally 5'-CCGGGTAAGTTCCGG-3'), cutting after A-8 on the top and C-11 on the bottom strand. Has a slow turnover rate, cuts the coding strand with a slight preference over the non-coding strand. In Desulfurococcus mucosus (Desulfurococcus mobilis), this protein is Homing endonuclease I-DmoI.